We begin with the raw amino-acid sequence, 376 residues long: MAIKVLVVDDSSFFRRRVSEIINAESRLEVIDVAVNGKEAVEKAKRLKPDVITMDIEMPVMDGISAVREIMASVPTPILMFSSLTHDGAKATLDALDAGALDFLPKKFEDIARNRDEAVSLLQQRVIQIASKRAFMRRPVASSTPVQERPQSTLNRPTTGLRREAPAQAPVSRAPVAAKFRASGKKYQLTAIGTSTGGPVALQKILTKLPANYPHPIVLIQHMPATFTAAFASRLNSLCKIQVKEAEDGDVLQAGVAYLAPGGKQMMIDGRPGAARLRIIDGGERMNYKPCVDVTFGSAAKIYADKVLSMVLTGMGADGREGARMLKSAGATIWAQDEDSCVVYGMPQAVAKAGLSTEDLPLERIAERMLVEVGLA.

The Response regulatory domain occupies 4–121 (KVLVVDDSSF…ARNRDEAVSL (118 aa)). Asp-55 carries the 4-aspartylphosphate modification. The segment at 138 to 174 (RPVASSTPVQERPQSTLNRPTTGLRREAPAQAPVSRA) is disordered. Over residues 141–158 (ASSTPVQERPQSTLNRPT) the composition is skewed to polar residues. The 194-residue stretch at 183 to 376 (SGKKYQLTAI…ERMLVEVGLA (194 aa)) folds into the CheB-type methylesterase domain. Residues Ser-195, His-222, and Asp-318 contribute to the active site.

Belongs to the CheB family. Post-translationally, phosphorylated by CheA. Phosphorylation of the N-terminal regulatory domain activates the methylesterase activity.

Its subcellular location is the cytoplasm. The catalysed reaction is [protein]-L-glutamate 5-O-methyl ester + H2O = L-glutamyl-[protein] + methanol + H(+). The enzyme catalyses L-glutaminyl-[protein] + H2O = L-glutamyl-[protein] + NH4(+). Functionally, involved in chemotaxis. Part of a chemotaxis signal transduction system that modulates chemotaxis in response to various stimuli. Catalyzes the demethylation of specific methylglutamate residues introduced into the chemoreceptors (methyl-accepting chemotaxis proteins or MCP) by CheR. Also mediates the irreversible deamidation of specific glutamine residues to glutamic acid. In Vibrio vulnificus (strain CMCP6), this protein is Protein-glutamate methylesterase/protein-glutamine glutaminase 1.